We begin with the raw amino-acid sequence, 387 residues long: Putative acid--amine ligase YjfC (387 aa).

Position 101–103 (101–103 (RMD)) interacts with ATP. Residues Asp103, Glu116, and Asn118 each contribute to the Mg(2+) site. ATP is bound by residues Lys265, Lys302, Gly309, Gln337, and 372–374 (LIT).

Belongs to the glutathionylspermidine synthase preATP-grasp family.

Its function is as follows. May be a ligase forming an amide bond. Shows ATPase activity. Despite its similarity to the C-terminal synthetase domain of Gss, is not a glutathionylspermidine (Gsp) synthetase. Cannot synthesize Gsp, glutathione (GSH), or GSH intermediates, from GSH and spermidine, cysteine and glutamate, gamma-glutamylcysteine and spermidine, and gamma-glutamylcysteine and glycine. Does not bind to Gsp. The chain is Putative acid--amine ligase YjfC (yjfC) from Escherichia coli (strain K12).